Here is a 269-residue protein sequence, read N- to C-terminus: Formamidopyrimidine-DNA glycosylase (269 aa).

Pro2 (schiff-base intermediate with DNA) is an active-site residue. The Proton donor role is filled by Glu3. Lys57 (proton donor; for beta-elimination activity) is an active-site residue. The DNA site is built by His90, Arg109, and Lys150. Residues Gln235–Lys269 form an FPG-type zinc finger. The Proton donor; for delta-elimination activity role is filled by Arg259.

The protein belongs to the FPG family. Monomer. Requires Zn(2+) as cofactor.

It catalyses the reaction Hydrolysis of DNA containing ring-opened 7-methylguanine residues, releasing 2,6-diamino-4-hydroxy-5-(N-methyl)formamidopyrimidine.. The catalysed reaction is 2'-deoxyribonucleotide-(2'-deoxyribose 5'-phosphate)-2'-deoxyribonucleotide-DNA = a 3'-end 2'-deoxyribonucleotide-(2,3-dehydro-2,3-deoxyribose 5'-phosphate)-DNA + a 5'-end 5'-phospho-2'-deoxyribonucleoside-DNA + H(+). Its function is as follows. Involved in base excision repair of DNA damaged by oxidation or by mutagenic agents. Acts as a DNA glycosylase that recognizes and removes damaged bases. Has a preference for oxidized purines, such as 7,8-dihydro-8-oxoguanine (8-oxoG). Has AP (apurinic/apyrimidinic) lyase activity and introduces nicks in the DNA strand. Cleaves the DNA backbone by beta-delta elimination to generate a single-strand break at the site of the removed base with both 3'- and 5'-phosphates. This Salmonella paratyphi C (strain RKS4594) protein is Formamidopyrimidine-DNA glycosylase.